A 240-amino-acid chain; its full sequence is tRNA (guanine-N(1)-)-methyltransferase (240 aa).

S-adenosyl-L-methionine is bound by residues G108 and 127–132 (LGDFIL).

Belongs to the RNA methyltransferase TrmD family. Homodimer.

The protein localises to the cytoplasm. It catalyses the reaction guanosine(37) in tRNA + S-adenosyl-L-methionine = N(1)-methylguanosine(37) in tRNA + S-adenosyl-L-homocysteine + H(+). Its function is as follows. Specifically methylates guanosine-37 in various tRNAs. The sequence is that of tRNA (guanine-N(1)-)-methyltransferase from Streptococcus mutans serotype c (strain ATCC 700610 / UA159).